A 377-amino-acid polypeptide reads, in one-letter code: uncharacterized protein (377 aa).

The disordered stretch occupies residues 1–25 (MAQQTNVAGQKTEKQRKAPFRADHV). Positions 11 to 24 (KTEKQRKAPFRADH) are enriched in basic and acidic residues.

To B.subtilis YxjG.

This is an uncharacterized protein from Bacillus subtilis (strain 168).